Reading from the N-terminus, the 186-residue chain is Threonylcarbamoyl-AMP synthase (186 aa).

One can recognise a YrdC-like domain in the interval 1–186 (MADTWEAAHS…LNNQVFRDDA (186 aa)).

The protein belongs to the SUA5 family. TsaC subfamily.

It localises to the cytoplasm. It catalyses the reaction L-threonine + hydrogencarbonate + ATP = L-threonylcarbamoyladenylate + diphosphate + H2O. Required for the formation of a threonylcarbamoyl group on adenosine at position 37 (t(6)A37) in tRNAs that read codons beginning with adenine. Catalyzes the conversion of L-threonine, HCO(3)(-)/CO(2) and ATP to give threonylcarbamoyl-AMP (TC-AMP) as the acyladenylate intermediate, with the release of diphosphate. This is Threonylcarbamoyl-AMP synthase from Idiomarina loihiensis (strain ATCC BAA-735 / DSM 15497 / L2-TR).